Consider the following 367-residue polypeptide: 4-hydroxy-3-methylbut-2-en-1-yl diphosphate synthase (flavodoxin) (367 aa).

Positions 270, 273, 305, and 312 each coordinate [4Fe-4S] cluster.

This sequence belongs to the IspG family. The cofactor is [4Fe-4S] cluster.

The catalysed reaction is (2E)-4-hydroxy-3-methylbut-2-enyl diphosphate + oxidized [flavodoxin] + H2O + 2 H(+) = 2-C-methyl-D-erythritol 2,4-cyclic diphosphate + reduced [flavodoxin]. The protein operates within isoprenoid biosynthesis; isopentenyl diphosphate biosynthesis via DXP pathway; isopentenyl diphosphate from 1-deoxy-D-xylulose 5-phosphate: step 5/6. Its function is as follows. Converts 2C-methyl-D-erythritol 2,4-cyclodiphosphate (ME-2,4cPP) into 1-hydroxy-2-methyl-2-(E)-butenyl 4-diphosphate. The chain is 4-hydroxy-3-methylbut-2-en-1-yl diphosphate synthase (flavodoxin) from Pasteurella multocida (strain Pm70).